The chain runs to 1275 residues: Rho1 guanine nucleotide exchange factor 3 (1275 aa).

Disordered stretches follow at residues 1–42 (MKLS…SFQK), 56–113 (SPPF…NSAA), 131–188 (NNPL…SPYS), and 214–248 (LSPTRSPARTPSPIRLYSSDALRPQSPLSPSVEYL). Positions 7 to 17 (LFHRSSKDHGG) are enriched in basic and acidic residues. 3 stretches are compositionally biased toward polar residues: residues 32-42 (PHSSSPPSFQK), 80-113 (ASINSRRVASYTVQSSPSRTTYRQLPNEPQNSAA), and 142-151 (SPGNKQNTVD). Low complexity-rich tracts occupy residues 178-188 (SSVSSHSSPYS) and 214-228 (LSPTRSPARTPSPIR). At Ser-293 the chain carries Phosphoserine. Residues 465–657 (ARQNNIHELI…RATCEECDAV (193 aa)) enclose the DH domain. The PH domain occupies 692–855 (EFFFEGIVQR…WVEKINVAKK (164 aa)). Residues 930 to 1239 (YGDISCIAQF…KYYPSNSDWL (310 aa)) enclose the CNH domain.

Its subcellular location is the cytoplasm. Stimulates the exchange of Rho1 GDP-bound form into GTP-bound form. Regulates, via interaction and activation of Rho1, beta-1,3-glucan biosynthesis and cell wall integrity during septation. Involved in the regulation of contractile ring assembly. This chain is Rho1 guanine nucleotide exchange factor 3 (rgf3), found in Schizosaccharomyces pombe (strain 972 / ATCC 24843) (Fission yeast).